Consider the following 153-residue polypeptide: D-aminoacyl-tRNA deacylase (153 aa).

Positions 140–141 (GP) match the Gly-cisPro motif, important for rejection of L-amino acids motif.

This sequence belongs to the DTD family. In terms of assembly, homodimer.

The protein resides in the cytoplasm. It catalyses the reaction glycyl-tRNA(Ala) + H2O = tRNA(Ala) + glycine + H(+). It carries out the reaction a D-aminoacyl-tRNA + H2O = a tRNA + a D-alpha-amino acid + H(+). Functionally, an aminoacyl-tRNA editing enzyme that deacylates mischarged D-aminoacyl-tRNAs. Also deacylates mischarged glycyl-tRNA(Ala), protecting cells against glycine mischarging by AlaRS. Acts via tRNA-based rather than protein-based catalysis; rejects L-amino acids rather than detecting D-amino acids in the active site. By recycling D-aminoacyl-tRNA to D-amino acids and free tRNA molecules, this enzyme counteracts the toxicity associated with the formation of D-aminoacyl-tRNA entities in vivo and helps enforce protein L-homochirality. This chain is D-aminoacyl-tRNA deacylase, found in Trichodesmium erythraeum (strain IMS101).